Reading from the N-terminus, the 344-residue chain is GTPase Obg (344 aa).

One can recognise an Obg domain in the interval 1 to 159; it reads MKFLDLCKVY…RTLWLRLKLI (159 aa). A disordered region spans residues 126–146; sequence GNLHFKSSTNQAPRRSNPGQD. Residues 130 to 144 show a composition bias toward polar residues; that stretch reads FKSSTNQAPRRSNPG. Residues 160 to 327 form the OBG-type G domain; that stretch reads ADVGLLGLPN…VLRKLRGEIS (168 aa). Residues 166 to 173, 191 to 195, 212 to 215, 279 to 282, and 308 to 310 each bind GTP; these read GLPNAGKS, FTTLH, DIPG, NKID, and SGV. Residues S173 and T193 each contribute to the Mg(2+) site.

Belongs to the TRAFAC class OBG-HflX-like GTPase superfamily. OBG GTPase family. In terms of assembly, monomer. Mg(2+) is required as a cofactor.

Its subcellular location is the cytoplasm. Its function is as follows. An essential GTPase which binds GTP, GDP and possibly (p)ppGpp with moderate affinity, with high nucleotide exchange rates and a fairly low GTP hydrolysis rate. Plays a role in control of the cell cycle, stress response, ribosome biogenesis and in those bacteria that undergo differentiation, in morphogenesis control. This is GTPase Obg from Roseobacter denitrificans (strain ATCC 33942 / OCh 114) (Erythrobacter sp. (strain OCh 114)).